A 66-amino-acid polypeptide reads, in one-letter code: MSQPLTVDCPTCGAPVEWSEKNAFRPFCSDRCKLIDLGAWAAEEHKIAGSEGSEDELYSGDLEPRH.

Residues cysteine 9, cysteine 12, cysteine 28, and cysteine 32 each contribute to the Zn(2+) site. The disordered stretch occupies residues 45-66; the sequence is HKIAGSEGSEDELYSGDLEPRH.

It belongs to the DNA gyrase inhibitor YacG family. As to quaternary structure, interacts with GyrB. Zn(2+) is required as a cofactor.

In terms of biological role, inhibits all the catalytic activities of DNA gyrase by preventing its interaction with DNA. Acts by binding directly to the C-terminal domain of GyrB, which probably disrupts DNA binding by the gyrase. In Pseudomonas putida (strain ATCC 700007 / DSM 6899 / JCM 31910 / BCRC 17059 / LMG 24140 / F1), this protein is DNA gyrase inhibitor YacG.